The primary structure comprises 472 residues: Adenosylhomocysteinase (472 aa).

The substrate site is built by Thr64, Asp138, and Glu198. Thr199–Thr201 serves as a coordination point for NAD(+). Substrate is bound by residues Lys228 and Asp232. NAD(+) is bound by residues Asn233, Gly262–Gly267, Glu285, Asn320, Ile341–His343, and Asn386.

It belongs to the adenosylhomocysteinase family. NAD(+) serves as cofactor.

It is found in the cytoplasm. It carries out the reaction S-adenosyl-L-homocysteine + H2O = L-homocysteine + adenosine. Its pathway is amino-acid biosynthesis; L-homocysteine biosynthesis; L-homocysteine from S-adenosyl-L-homocysteine: step 1/1. In terms of biological role, may play a key role in the regulation of the intracellular concentration of adenosylhomocysteine. The chain is Adenosylhomocysteinase from Prochlorococcus marinus (strain MIT 9312).